The sequence spans 96 residues: Large ribosomal subunit protein eL14 (96 aa).

Belongs to the eukaryotic ribosomal protein eL14 family.

This Metallosphaera sedula (strain ATCC 51363 / DSM 5348 / JCM 9185 / NBRC 15509 / TH2) protein is Large ribosomal subunit protein eL14.